The primary structure comprises 257 residues: MDHLLQHQDVFGNYNKAREAMGLSYSSNPTPLDNDQKKPSPATAVTRPQPPELALRCPRCDSTNTKFCYYNNYSLTQPRYFCKSCRRYWTKGGTLRNIPVGGGCRKNKRSTSSAARSLRTTPEPASHDGKVFSAAGFNGYSNNEHIDLSLAFALLNKQHPGSSSQLGFHSELGSSHQSDMEGMFGTSQQKENATYAFGNGSSGLGDPSRVLWGFPWQMNGESFGMMNIGGGGGHVDQIDSGREMWTNMNYINSGALM.

Residues 23 to 50 are disordered; it reads LSYSSNPTPLDNDQKKPSPATAVTRPQP. A compositionally biased stretch (polar residues) spans 24–33; sequence SYSSNPTPLD. A Dof-type zinc finger spans residues 55–109; the sequence is LRCPRCDSTNTKFCYYNNYSLTQPRYFCKSCRRYWTKGGTLRNIPVGGGCRKNKR. Positions 57, 60, 82, and 85 each coordinate Zn(2+). The tract at residues 104–127 is disordered; that stretch reads CRKNKRSTSSAARSLRTTPEPASH. Over residues 110–121 the composition is skewed to low complexity; that stretch reads STSSAARSLRTT.

As to expression, the PEAR proteins (e.g. DOF2.4, DOF5.1, DOF3.2, DOF1.1, DOF5.6 and DOF5.3) form a short-range concentration gradient that peaks at protophloem sieve elements (PSE). Accumulates in the stele.

The protein localises to the nucleus. In terms of biological role, transcription factor that binds specifically to a 5'-AA[AG]G-3' consensus core sequence. The PEAR proteins (e.g. DOF2.4, DOF5.1, DOF3.2, DOF1.1, DOF5.6 and DOF5.3) activate gene expression that promotes radial growth of protophloem sieve elements. The protein is Dof zinc finger protein DOF5.3 of Arabidopsis thaliana (Mouse-ear cress).